We begin with the raw amino-acid sequence, 337 residues long: tRNA N6-adenosine threonylcarbamoyltransferase (337 aa).

H111 and H115 together coordinate Fe cation. Residues L134–G138, D167, G180, and N272 contribute to the substrate site. A Fe cation-binding site is contributed by D300.

This sequence belongs to the KAE1 / TsaD family. Fe(2+) serves as cofactor.

The protein localises to the cytoplasm. It catalyses the reaction L-threonylcarbamoyladenylate + adenosine(37) in tRNA = N(6)-L-threonylcarbamoyladenosine(37) in tRNA + AMP + H(+). Its function is as follows. Required for the formation of a threonylcarbamoyl group on adenosine at position 37 (t(6)A37) in tRNAs that read codons beginning with adenine. Is involved in the transfer of the threonylcarbamoyl moiety of threonylcarbamoyl-AMP (TC-AMP) to the N6 group of A37, together with TsaE and TsaB. TsaD likely plays a direct catalytic role in this reaction. The polypeptide is tRNA N6-adenosine threonylcarbamoyltransferase (Escherichia coli O127:H6 (strain E2348/69 / EPEC)).